The following is a 134-amino-acid chain: Profilin-2 (134 aa).

C13 and C118 are oxidised to a cystine. An Involved in PIP2 interaction motif is present at residues A84–T100. T114 carries the phosphothreonine modification.

Belongs to the profilin family. As to quaternary structure, occurs in many kinds of cells as a complex with monomeric actin in a 1:1 ratio. In terms of processing, phosphorylated by MAP kinases.

The protein localises to the cytoplasm. The protein resides in the cytoskeleton. In terms of biological role, binds to actin and affects the structure of the cytoskeleton. At high concentrations, profilin prevents the polymerization of actin, whereas it enhances it at low concentrations. The sequence is that of Profilin-2 from Olea europaea (Common olive).